Reading from the N-terminus, the 87-residue chain is Putative protein KleG (87 aa).

Disordered stretches follow at residues 1–23 and 61–87; these read MRHS…WPSS and IPTT…IFSR. The span at 68-78 shows a compositional bias: basic residues; that stretch reads RGRRPQRHRPS.

The sequence is that of Putative protein KleG (kleG) from Escherichia coli.